A 129-amino-acid polypeptide reads, in one-letter code: Small ribosomal subunit protein uS11 (129 aa).

It belongs to the universal ribosomal protein uS11 family. As to quaternary structure, part of the 30S ribosomal subunit. Interacts with proteins S7 and S18. Binds to IF-3.

Its function is as follows. Located on the platform of the 30S subunit, it bridges several disparate RNA helices of the 16S rRNA. Forms part of the Shine-Dalgarno cleft in the 70S ribosome. In Photobacterium profundum (strain SS9), this protein is Small ribosomal subunit protein uS11.